The chain runs to 1423 residues: MEGTSFHQASNSMRRNSSVWKKDSGREIFSRSSREEDDEEALRWAALEKLPTFDRLRKGILTASHAGGPINEIDIQKLGFQDTKKLLERLIKVGDDEHEKLLWKLKKRIDRVGIDLPTIEVRFDHLKVEAEVHVGGRALPTFVNFISNFADKFLNTLHLVPNRKKKFTILNDVSGIVKPGRMALLLGPPSSGKTTLLLALAGKLDQELKQTGRVTYNGHGMNEFVPQRTAAYIGQNDVHIGEMTVRETFAYAARFQGVGSRYDMLTELARREKEANIKPDPDIDIFMKAMSTAGEKTNVMTDYILKILGLEVCADTMVGDDMLRGISGGQKKRVTTGEMLVGPSRALFMDEISTGLDSSTTYQIVNSLRNYVHIFNGTALISLLQPAPETFNLFDDIILIAEGEIIYEGPRDHVVEFFETMGFKCPPRKGVADFLQEVTSKKDQMQYWARRDEPYRFIRVREFAEAFQSFHVGRRIGDELALPFDKTKSHPAALTTKKYGVGIKELVKTSFSREYLLMKRNSFVYYFKFGQLLVMAFLTMTLFFRTEMQKKTEVDGSLYTGALFFILMMLMFNGMSELSMTIAKLPVFYKQRDLLFYPAWVYSLPPWLLKIPISFMEAALTTFITYYVIGFDPNVGRLFKQYILLVLMNQMASALFKMVAALGRNMIVANTFGAFAMLVFFALGGVVLSRDDIKKWWIWGYWISPIMYGQNAILANEFFGHSWSRAVENSSETLGVTFLKSRGFLPHAYWYWIGTGALLGFVVLFNFGFTLALTFLNSLGKPQAVIAEEPASDETELQSARSEGVVEAGANKKRGMVLPFEPHSITFDNVVYSVDMPQEMIEQGTQEDRLVLLKGVNGAFRPGVLTALMGVSGAGKTTLMDVLAGRKTGGYIDGNITISGYPKNQQTFARISGYCEQTDIHSPHVTVYESLVYSAWLRLPKEVDKNKRKIFIEEVMELVELTPLRQALVGLPGESGLSTEQRKRLTIAVELVANPSIIFMDEPTSGLDARAAAIVMRTVRNTVDTGRTVVCTIHQPSIDIFEAFDELFLLKRGGEEIYVGPLGHESTHLINYFESIQGINKITEGYNPATWMLEVSTTSQEAALGVDFAQVYKNSELYKRNKELIKELSQPAPGSKDLYFPTQYSQSFLTQCMASLWKQHWSYWRNPPYTAVRFLFTIGIALMFGTMFWDLGGKTKTRQDLSNAMGSMYTAVLFLGLQNAASVQPVVNVERTVFYREQAAGMYSAMPYAFAQVFIEIPYVLVQAIVYGLIVYAMIGFEWTAVKFFWYLFFMYGSFLTFTFYGMMAVAMTPNHHIASVVSSAFYGIWNLFSGFLIPRPSMPVWWEWYYWLCPVAWTLYGLIASQFGDITEPMADSNMSVKQFIREFYGYREGFLGVVAAMNVIFPLLFAVIFAIGIKSFNFQKR.

Over residues Met1–Val19 the composition is skewed to polar residues. The disordered stretch occupies residues Met1–Glu36. N-linked (GlcNAc...) asparagine glycosylation is present at Asn16. Residues Trp20–Arg34 are compositionally biased toward basic and acidic residues. The 274-residue stretch at Leu154–Pro427 folds into the ABC transporter 1 domain. An ATP-binding site is contributed by Gly187–Thr194. Asn376 carries N-linked (GlcNAc...) asparagine glycosylation. Residues Glu505 to Phe718 enclose the ABC transmembrane type-2 1 domain. Transmembrane regions (helical) follow at residues Phe523 to Phe543, Ala562 to Ile582, Ile611 to Phe631, Ile643 to Gly663, Ile667 to Val687, and Trp696 to Asn716. Asn729 carries N-linked (GlcNAc...) asparagine glycosylation. A helical transmembrane segment spans residues Gly756–Leu776. The region spanning Ile825–Gln1077 is the ABC transporter 2 domain. Gly870–Thr877 contributes to the ATP binding site. An N-linked (GlcNAc...) asparagine glycan is attached at Asn895. A Phosphothreonine modification is found at Thr962. One can recognise an ABC transmembrane type-2 2 domain in the interval Thr1150–Phe1364. 6 helical membrane-spanning segments follow: residues Phe1174 to Lys1194, Ser1207 to Val1227, Ile1257 to Phe1277, Phe1284 to Met1304, Ile1314 to Ile1334, and Val1341 to Ala1361. N-linked (GlcNAc...) asparagine glycosylation is present at Asn1375. The chain crosses the membrane as a helical span at residues Val1395–Ile1415.

It belongs to the ABC transporter superfamily. ABCG family. PDR (TC 3.A.1.205) subfamily. As to quaternary structure, interacts with LECRK91 and LECRK92. Mostly observed in inflorescence meristems relative to cauline leaves and developing siliques. Ubiquitous with higher levels in leaves, stems and flowers. Also present in primary and lateral roots. In seeds, mainly expressed in the embryo and, to a lesser extent, in the endosperm.

The protein resides in the cell membrane. The catalysed reaction is abscisate(out) + ATP + H2O = abscisate(in) + ADP + phosphate + H(+). With respect to regulation, inhibited by glibenclamide, verapamil and vanadate (ABC transporters inhibitors). Functionally, high affinity abscisic acid (ABA) transporter that mediates the import of ABA, with a preference for (+)-ABA, through the plasma membrane, especially in guard cells, and is involved in the intercellular and intracellular ABA signaling pathways leading, for example, to stomatal closure, thus conferring drought tolerance. Together with ABCG30, import into the embryo the ABA delivered from the endosperm via ABCG25 and ABCG31-mediated export to suppress radicle extension and subsequent embryonic growth. May be a general defense protein. Functions as a pump to exclude Pb(2+) ions and/or Pb(2+)-containing toxic compounds from the cytoplasm. Contributes to Pb(2+) ions resistance. Confers some resistance to the terpene sclareol. (Microbial infection) Involved in resistance response to the pathogenic oomycetes Phytophthora infestans and Phytophthora capsici. The sequence is that of ABC transporter G family member 40 from Arabidopsis thaliana (Mouse-ear cress).